The primary structure comprises 308 residues: Olfactory receptor 6F1 (308 aa).

Residues 1-25 lie on the Extracellular side of the membrane; it reads MDTGNKTLPQDFLLLGFPGSQTLQL. A glycan (N-linked (GlcNAc...) asparagine) is linked at Asn5. Residues 26 to 46 form a helical membrane-spanning segment; the sequence is SLFMLFLVMYILTVSGNVAIL. At 47–54 the chain is on the cytoplasmic side; it reads MLVSTSHQ. The helical transmembrane segment at 55-75 threads the bilayer; sequence LHTPMYFFLSNLSFLEIWYTT. At 76-99 the chain is on the extracellular side; the sequence is AAVPKALAILLGRSQTISFTSCLL. Residues Cys97 and Cys189 are joined by a disulfide bond. A helical membrane pass occupies residues 100 to 120; it reads QMYFVFSLGCTEYFLLAAMAY. Residues 121–139 lie on the Cytoplasmic side of the membrane; it reads DRCLAICYPLHYGAIMSSL. A helical transmembrane segment spans residues 140-160; the sequence is LSAQLALGSWVCGFVAIAVPT. Residues 161–197 are Extracellular-facing; sequence ALISGLSFCGPRAINHFFCDIAPWIALACTNTQAVEL. Residues 198–217 form a helical membrane-spanning segment; the sequence is VAFVIAVVVILSSCLITFVS. Over 218-237 the chain is Cytoplasmic; it reads YVYIISTILRIPSASGRSKA. Residues 238-258 form a helical membrane-spanning segment; that stretch reads FSTCSSHLTVVLIWYGSTVFL. Topologically, residues 259-271 are extracellular; sequence HVRTSIKDALDLI. The helical transmembrane segment at 272–292 threads the bilayer; sequence KAVHVLNTVVTPVLNPFIYTL. Residues 293 to 308 lie on the Cytoplasmic side of the membrane; it reads RNKEVRETLLKKWKGK.

It belongs to the G-protein coupled receptor 1 family.

It is found in the cell membrane. Odorant receptor. The polypeptide is Olfactory receptor 6F1 (OR6F1) (Homo sapiens (Human)).